Reading from the N-terminus, the 439-residue chain is MASLTVKAYLLGKEEAAREIRRFSFCFSPEPEAEAAAGPGPCERLLSRVAVLFPALRPGGFQAHYRDEDGDLVAFSSDEELTMAMSYVKDDIFRIYIKEKKECRREHRPPCAQEARSMVHPNVICDGCNGPVVGTRYKCSVCPDYDLCSVCEGKGLHREHSKLIFPNPFGHLSDSFSHSRWLRKLKHGHFGWPGWEMGPPGNWSPRPPRAGDGRPCPTAESASAPSEDPNVNFLKNVGESVAAALSPLGIEVDIDVEHGGKRSRLTPTSAESSSTGTEDKSGTQPSSCSSEVSKPDGAGEGPAQSLTEQMKKIALESVGQPEELMESDNCSGGDDDWTHLSSKEVDPSTGELQSLQMPESEGPSSLDPSQEGPTGLKEAALYPHLPPEADPRLIESLSQMLSMGFSDEGGWLTRLLQTKNYDIGAALDTIQYSKHPPPL.

Position 2 is an N-acetylalanine (Ala-2). Positions 2–48 are interaction with LCK; sequence ASLTVKAYLLGKEEAAREIRRFSFCFSPEPEAEAAAGPGPCERLLSR. One can recognise a PB1 domain in the interval 3-100; the sequence is SLTVKAYLLG…DIFRIYIKEK (98 aa). Ser-24 bears the Phosphoserine mark. An interaction with PRKCZ and dimerization region spans residues 41-105; the sequence is PCERLLSRVA…YIKEKKECRR (65 aa). The interaction with PAWR stretch occupies residues 48–78; the sequence is RVAVLFPALRPGGFQAHYRDEDGDLVAFSSD. The interval 119–221 is interaction with GABRR3; sequence VHPNVICDGC…DGRPCPTAES (103 aa). The ZZ-type zinc-finger motif lies at 120-170; the sequence is HPNVICDGCNGPVVGTRYKCSVCPDYDLCSVCEGKGLHREHSKLIFPNPFG. Zn(2+)-binding residues include Cys-125, Cys-128, Cys-139, and Cys-142. Tyr-145 is subject to Phosphotyrosine. 4 residues coordinate Zn(2+): Cys-148, Cys-151, His-157, and His-160. The LIM protein-binding stretch occupies residues 167–217; sequence NPFGHLSDSFSHSRWLRKLKHGHFGWPGWEMGPPGNWSPRPPRAGDGRPCP. 3 positions are modified to phosphoserine: Ser-173, Ser-175, and Ser-204. The segment at 201 to 231 is disordered; the sequence is GNWSPRPPRAGDGRPCPTAESASAPSEDPNV. The TRAF6-binding signature appears at 225 to 230; sequence PSEDPN. Ser-246 and Ser-263 each carry phosphoserine. A disordered region spans residues 259–389; it reads GGKRSRLTPT…ALYPHLPPEA (131 aa). Residues 265-292 are compositionally biased toward polar residues; that stretch reads LTPTSAESSSTGTEDKSGTQPSSCSSEV. A Phosphothreonine modification is found at Thr-266. The tract at residues 266–439 is interaction with NTRK1; the sequence is TPTSAESSST…IQYSKHPPPL (174 aa). Phosphoserine occurs at positions 269 and 281. Cys-288 carries the S-palmitoyl cysteine lipid modification. Phosphoserine is present on residues Ser-305, Ser-327, and Ser-331. Positions 320–341 are MAP1LC3B-binding; that stretch reads QPEELMESDNCSGGDDDWTHLS. An LIR motif is present at residues 335-340; that stretch reads DDWTHL. Residues 336–346 show a composition bias toward basic and acidic residues; the sequence is DWTHLSSKEVD. Residues 346 to 351 form an interaction with KEAP1 region; the sequence is DPSTGE. A phosphoserine mark is found at Ser-348, Ser-354, Ser-360, Ser-364, and Ser-365. A compositionally biased stretch (polar residues) spans 350–372; that stretch reads GELQSLQMPESEGPSSLDPSQEG. Residues 388–433 enclose the UBA domain; sequence EADPRLIESLSQMLSMGFSDEGGWLTRLLQTKNYDIGAALDTIQYS. A Phosphoserine; by ULK1 and TBK1 modification is found at Ser-402. Ser-406 carries the post-translational modification Phosphoserine. Lys-419 and Lys-434 each carry N6-acetyllysine; alternate. Lys-419 participates in a covalent cross-link: Glycyl lysine isopeptide (Lys-Gly) (interchain with G-Cter in ubiquitin); alternate. Residue Lys-434 forms a Glycyl lysine isopeptide (Lys-Gly) (interchain with G-Cter in SUMO2); alternate linkage.

As to quaternary structure, homooligomer or heterooligomer; may form homotypic arrays. Dimerization interferes with ubiquitin binding. Component of a ternary complex with PAWR and PRKCZ. Forms a complex with JUB/Ajuba, PRKCZ and TRAF6. Identified in a complex with TRAF6 and CYLD. Identified in a heterotrimeric complex with ubiquitin and ZFAND5, where ZFAND5 and SQSTM1 both interact with the same ubiquitin molecule. Interacts (via LIR motif) with MAP1LC3A and MAP1LC3B, as well as with other ATG8 family members, including GABARAP, GABARAPL1 and GABARAPL2; these interactions are necessary for the recruitment MAP1 LC3 family members to inclusion bodies containing polyubiquitinated protein aggregates and for their degradation by autophagy. Interacts directly with PRKCI and PRKCZ. Interacts with EBI3, LCK, RASA1, NR2F2, NTRK1, NTRK2, NTRK3, NBR1, MAP2K5 and MAPKAPK5. Upon TNF-alpha stimulation, interacts with RIPK1 probably bridging IKBKB to the TNF-R1 complex composed of TNF-R1/TNFRSF1A, TRADD and RIPK1. Interacts with the proteasome subunits PSMD4 and PSMC2. Interacts with TRAF6. Interacts with 'Lys-63'-linked polyubiquitinated MAPT/TAU. Interacts with FHOD3. Interacts with CYLD. Interacts with SESN1. Interacts with SESN2. Interacts with ULK1. Interacts with UBD. Interacts with WDR81; the interaction is direct and regulates the interaction of SQSTM1 with ubiquitinated proteins. Interacts with WDFY3; this interaction is required to recruit WDFY3 to cytoplasmic bodies and to PML bodies. Interacts with LRRC25. Interacts with STING1; leading to relocalization of STING1 to autophagosomes. Interacts (when phosphorylated at Ser-348) with KEAP1; the interaction is direct and inactivates the BCR(KEAP1) complex by sequestering KEAP1 in inclusion bodies, promoting its degradation. Interacts with MOAP1; promoting dissociation of SQSTM1 inclusion bodies that sequester KEAP1. Interacts with GBP1. Interacts with TAX1BP1. Interacts with (ubiquitinated) PEX5; specifically binds PEX5 ubiquitinated at 'Lys-209' in response to reactive oxygen species (ROS). Interacts (via PB1 domain) with TNS2; the interaction leads to sequestration of TNS2 in cytoplasmic aggregates with SQSTM1 and promotes TNS2 ubiquitination and proteasomal degradation. Interacts with IRS1; the interaction is disrupted by the presence of tensin TNS2. Interacts with TRIM5. Interacts with TRIM11 (when ubiquitinated); promoting AIM2 recruitment to autophagosomes and autophagy-dependent degradation of AIM2. Interacts with TRIM13. Interacts with TRIM16. Interacts with TRIM23. Interacts with TRIM50. Interacts with TRIM55. Interacts with ECSIT; this interaction inhibits TLR4 signaling via functional regulation of the TRAF6-ECSIT complex. Interacts with GABRR1, GABRR2 and GABRR3. Interacts with WDR83. Interacts with GRB2. Interacts with USP12; the interaction is independent of USP12 deubiquitinase activity and may be involved in regulation of autophagic flux. Interacts with ASB6. In terms of processing, phosphorylated. Phosphorylation at Ser-406 by ULK1 destabilizes the UBA dimer interface and increases binding affinity to ubiquitinated proteins. Phosphorylation at Ser-406 also primes for subsequent phosphorylation at Ser-402. Phosphorylation at Ser-402 by CK2 or ULK1 promotes binding to ubiquitinated proteins by increasing the affinity between the UBA domain and polyubiquitin chains. Phosphorylation at Ser-402 by ULK1 is stimulated by SESN2. Phosphorylated at Ser-402 by TBK1, leading to promote relocalization of 'Lys-63'-linked ubiquitinated STING1 to autophagosomes. Phosphorylation at Ser-348 by ULK1 promotes interaction with KEAP1 and inactivation of the BCR(KEAP1) complex, promoting NFE2L2/NRF2 nuclear accumulation and expression of phase II detoxifying enzymes. Phosphorylated in vitro by TTN. Ubiquitinated by UBE2J1 and RNF26 at Lys-434: ubiquitinated SQSTM1 attracts specific vesicle-associated adapters, forming a molecular bridge that restrains cognate vesicles in the perinuclear region and organizes the endosomal pathway for efficient cargo transport. Ubiquitination by UBE2D2 and UBE2D3 increases its ability to bind polyubiquitin chains by destabilizing the UBA dimer interface. Deubiquitination by USP15 releases target vesicles for fast transport into the cell periphery. Ubiquitinated by the BCR(KEAP1) complex at Lys-419, increasing SQSTM1 sequestering activity and promoting its degradation. Ubiquitinated via 'Lys-29' and 'Lys-33'-linked polyubiquitination leading to xenophagic targeting of bacteria and inhibition of their replication. Post-translationally, acetylated at Lys-419 and Lys-434 by KAT5/TIP60, promotes activity by destabilizing the UBA dimer interface and increases binding affinity to ubiquitinated proteins. Deacetylated by HDAC6. In terms of processing, palmitoylation at Cys-288 by ZDHHC19 is required for efficient autophagic degradation of SQSTM1-cargo complexes by promoting affinity for ATG8 proteins and recruitment of p62 bodies to autophagosomes. Dealmitoylated at Cys-288 by LYPLA1. As to expression, ubiquitously expressed. In brain, mainly expressed by neurons, especially pyramidal neurons in the cerebral cortex and hippocampus. Also expressed by Purkinje cells and neurons in the dentate nucleus of the cerebellum and neurons of the basal ganglia (at protein level).

Its subcellular location is the cytoplasmic vesicle. It is found in the autophagosome. The protein localises to the preautophagosomal structure. The protein resides in the cytoplasm. It localises to the cytosol. Its subcellular location is the nucleus. It is found in the PML body. The protein localises to the late endosome. The protein resides in the lysosome. It localises to the endoplasmic reticulum. Its subcellular location is the myofibril. It is found in the sarcomere. Functionally, molecular adapter required for selective macroautophagy (aggrephagy) by acting as a bridge between polyubiquitinated proteins and autophagosomes. Promotes the recruitment of ubiquitinated cargo proteins to autophagosomes via multiple domains that bridge proteins and organelles in different steps. SQSTM1 first mediates the assembly and removal of ubiquitinated proteins by undergoing liquid-liquid phase separation upon binding to ubiquitinated proteins via its UBA domain, leading to the formation of insoluble cytoplasmic inclusions, known as p62 bodies. SQSTM1 then interacts with ATG8 family proteins on autophagosomes via its LIR motif, leading to p62 body recruitment to autophagosomes, followed by autophagic clearance of ubiquitinated proteins. SQSTM1 is itself degraded along with its ubiquitinated cargos. Also required to recruit ubiquitinated proteins to PML bodies in the nucleus. Also involved in autophagy of peroxisomes (pexophagy) in response to reactive oxygen species (ROS) by acting as a bridge between ubiquitinated PEX5 receptor and autophagosomes. Acts as an activator of the NFE2L2/NRF2 pathway via interaction with KEAP1: interaction inactivates the BCR(KEAP1) complex by sequestering the complex in inclusion bodies, promoting nuclear accumulation of NFE2L2/NRF2 and subsequent expression of cytoprotective genes. Promotes relocalization of 'Lys-63'-linked ubiquitinated STING1 to autophagosomes. Involved in endosome organization by retaining vesicles in the perinuclear cloud: following ubiquitination by RNF26, attracts specific vesicle-associated adapters, forming a molecular bridge that restrains cognate vesicles in the perinuclear region and organizes the endosomal pathway for efficient cargo transport. Sequesters tensin TNS2 into cytoplasmic puncta, promoting TNS2 ubiquitination and proteasomal degradation. May regulate the activation of NFKB1 by TNF-alpha, nerve growth factor (NGF) and interleukin-1. May play a role in titin/TTN downstream signaling in muscle cells. Adapter that mediates the interaction between TRAF6 and CYLD. In terms of biological role, more potent than isoform 2 to stimulate PRKCZ-dependent phosphorylation of KCNAB2. The protein is Sequestosome-1 (Sqstm1) of Rattus norvegicus (Rat).